The primary structure comprises 618 residues: Serine/threonine-protein kinase TNNI3K (618 aa).

Residue glycine 2 is the site of N-myristoyl glycine attachment. Positions 21-51 (SESYVITIERLEDDLKIKEKELTELRNIFGS) form a coiled coil. ANK repeat units lie at residues 66 to 96 (NGLS…RPSR), 100 to 129 (NGFT…DIQQ), 133 to 162 (GGLT…NVNI), 166 to 195 (VFFT…DVNV), 199 to 228 (VGDR…KADV), 234 to 263 (EDHV…EVQP), 269 to 298 (YGDT…TESL), 304 to 335 (FSET…NINH), 339 to 368 (DGHT…DMNL), and 381 to 410 (DEQT…PQDE). The Protein kinase domain occupies 463–618 (IEFHEIIGSG…TAHTIYLLAP (156 aa)). ATP-binding positions include 469-477 (IGSGSFGKV) and lysine 490. Residue aspartate 588 is the Proton acceptor of the active site.

The protein belongs to the protein kinase superfamily. TKL Ser/Thr protein kinase family. MAP kinase kinase kinase subfamily. In terms of assembly, interacts with TNNI3, ACTC, ACTA1, MYBPC3, AIP, FABP3 and HADHB. It depends on Mg(2+) as a cofactor. In terms of processing, autophosphorylated.

Its subcellular location is the nucleus. It is found in the cytoplasm. The catalysed reaction is L-seryl-[protein] + ATP = O-phospho-L-seryl-[protein] + ADP + H(+). It catalyses the reaction L-threonyl-[protein] + ATP = O-phospho-L-threonyl-[protein] + ADP + H(+). In terms of biological role, may play a role in cardiac physiology. This chain is Serine/threonine-protein kinase TNNI3K, found in Pongo abelii (Sumatran orangutan).